Consider the following 461-residue polypeptide: Photosystem II CP43 reaction center protein (461 aa).

The propeptide occupies 1–2; the sequence is ME. The residue at position 3 (Thr3) is an N-acetylthreonine. Thr3 is subject to Phosphothreonine. 5 helical membrane-spanning segments follow: residues 57–81, 122–143, 166–188, 243–263, and 279–300; these read LFEVAHFVPEKPMYEQGLILLPHLA, LIGPETLEESFPFFGYVWKDKN, KAMYFGGVYDTWAPGGGDVRVIT, KPFAWARRALVWSGEAYLSYS, and WFNNTAYPSEFYGPTGPEASQA. Glu355 provides a ligand contact to [CaMn4O5] cluster. Residues 435–459 traverse the membrane as a helical segment; the sequence is RARAAAAGFEKGIERETEPALSMKP.

The protein belongs to the PsbB/PsbC family. PsbC subfamily. In terms of assembly, PSII is composed of 1 copy each of membrane proteins PsbA, PsbB, PsbC, PsbD, PsbE, PsbF, PsbH, PsbI, PsbJ, PsbK, PsbL, PsbM, PsbT, PsbX, PsbY, PsbZ, Psb30/Ycf12, at least 3 peripheral proteins of the oxygen-evolving complex and a large number of cofactors. It forms dimeric complexes. The cofactor is Binds multiple chlorophylls and provides some of the ligands for the Ca-4Mn-5O cluster of the oxygen-evolving complex. It may also provide a ligand for a Cl- that is required for oxygen evolution. PSII binds additional chlorophylls, carotenoids and specific lipids..

It localises to the plastid. Its subcellular location is the chloroplast thylakoid membrane. One of the components of the core complex of photosystem II (PSII). It binds chlorophyll and helps catalyze the primary light-induced photochemical processes of PSII. PSII is a light-driven water:plastoquinone oxidoreductase, using light energy to abstract electrons from H(2)O, generating O(2) and a proton gradient subsequently used for ATP formation. This is Photosystem II CP43 reaction center protein from Chlorokybus atmophyticus (Soil alga).